A 320-amino-acid polypeptide reads, in one-letter code: Putative polysaccharide deacetylase (320 aa).

Positions 69–303 constitute a NodB homology domain; the sequence is RSIESCFEYG…ITSKEGVWVA (235 aa).

The protein belongs to the polysaccharide deacetylase family. In terms of assembly, homodimer.

It is found in the prospore. Its function is as follows. May deacetylate chitin. Required for spore formation. The chain is Putative polysaccharide deacetylase from Schizosaccharomyces pombe (strain 972 / ATCC 24843) (Fission yeast).